The following is a 184-amino-acid chain: ATP synthase subunit b, chloroplastic (184 aa).

The helical transmembrane segment at 27–49 (LATNPINLSVVLGVLIFFGKGVL) threads the bilayer.

This sequence belongs to the ATPase B chain family. As to quaternary structure, F-type ATPases have 2 components, F(1) - the catalytic core - and F(0) - the membrane proton channel. F(1) has five subunits: alpha(3), beta(3), gamma(1), delta(1), epsilon(1). F(0) has four main subunits: a(1), b(1), b'(1) and c(10-14). The alpha and beta chains form an alternating ring which encloses part of the gamma chain. F(1) is attached to F(0) by a central stalk formed by the gamma and epsilon chains, while a peripheral stalk is formed by the delta, b and b' chains.

Its subcellular location is the plastid. It localises to the chloroplast thylakoid membrane. F(1)F(0) ATP synthase produces ATP from ADP in the presence of a proton or sodium gradient. F-type ATPases consist of two structural domains, F(1) containing the extramembraneous catalytic core and F(0) containing the membrane proton channel, linked together by a central stalk and a peripheral stalk. During catalysis, ATP synthesis in the catalytic domain of F(1) is coupled via a rotary mechanism of the central stalk subunits to proton translocation. Its function is as follows. Component of the F(0) channel, it forms part of the peripheral stalk, linking F(1) to F(0). The polypeptide is ATP synthase subunit b, chloroplastic (Oenothera elata subsp. hookeri (Hooker's evening primrose)).